The following is a 603-amino-acid chain: MAASCPLPVTPDLPTLRAKLQGLLQFLRDALSISNAHTVDFYTESVWEELVDLPPETVLAALRKSASETEALPSETRPLVEAEWEAGMTDFPKIFCETSQKLVSVEAFALAAKYYSVQNLGICTPFEQLLVALRGNQNQRIGENQKAVEFMNMKKSHEVQAMSELISSIADYYGIKQVIDLGSGKGYLSSFLSLKYGLKVYGIDSSNTNTHGAEERNRKLKKHWKLCHAQSRLDVNGLALKMAKERKVQNKVKNKADTEEVFNNSPTNQEKMPTSAILPDFSGSVISNIRNQMETLHSQPHQEENLCFENSFSLINLLPINAVEPTSSQQIPNRETSEANKERRKMTSKSSESNIYSPLTSFITADSELHDIIKDLEDCLMVGLHTCGDLAPNTLRIFTSNSEIKGVCSVGCCYHLLSEEFENQHKERTQEKWGFPMCHYLKEERWCCGRNARMSACLALERVAAGQGLPTESLFYRAVLQDIIKDCYGITKCDRHVGKIYSKCSSFLDYVRRSLKKLGLDESKLPEKIIMNYYEKYKPRMNELEAFNMLKVVLAPCIETLILLDRLCYLKEQEDIAWSALVKLFDPVKSPRCYAVIALKKQQ.

Residues 326-352 (TSSQQIPNRETSEANKERRKMTSKSSE) form a disordered region.

In terms of biological role, probable methyltransferase. In Homo sapiens (Human), this protein is Probable methyltransferase-like protein 25 (METTL25).